A 305-amino-acid polypeptide reads, in one-letter code: Probable GTP 3',8-cyclase (305 aa).

The Radical SAM core domain occupies 6 to 233 (RHGRPVMSLR…MQDRKKYYID (228 aa)). R15 contributes to the GTP binding site. Positions 22 and 26 each coordinate [4Fe-4S] cluster. Residue Y28 participates in S-adenosyl-L-methionine binding. C29 provides a ligand contact to [4Fe-4S] cluster. Residue R62 participates in GTP binding. G66 contributes to the S-adenosyl-L-methionine binding site. T92 is a GTP binding site. S116 lines the S-adenosyl-L-methionine pocket. Position 153 (K153) interacts with GTP. C249 and C252 together coordinate [4Fe-4S] cluster. 254–256 (RLR) is a GTP binding site. C266 is a binding site for [4Fe-4S] cluster.

The protein belongs to the radical SAM superfamily. MoaA family. [4Fe-4S] cluster is required as a cofactor.

The catalysed reaction is GTP + AH2 + S-adenosyl-L-methionine = (8S)-3',8-cyclo-7,8-dihydroguanosine 5'-triphosphate + 5'-deoxyadenosine + L-methionine + A + H(+). It participates in cofactor biosynthesis; molybdopterin biosynthesis. Catalyzes the cyclization of GTP to (8S)-3',8-cyclo-7,8-dihydroguanosine 5'-triphosphate. The polypeptide is Probable GTP 3',8-cyclase (Methanothermobacter thermautotrophicus (strain ATCC 29096 / DSM 1053 / JCM 10044 / NBRC 100330 / Delta H) (Methanobacterium thermoautotrophicum)).